The primary structure comprises 239 residues: ATP-dependent dethiobiotin synthetase BioD (239 aa).

22 to 27 (GIGKTV) lines the ATP pocket. Mg(2+) is bound at residue threonine 26. Lysine 47 is an active-site residue. A substrate-binding site is contributed by threonine 51. ATP is bound by residues aspartate 59, 124–127 (EGVG), and 184–185 (NR). Residues aspartate 59 and glutamate 124 each contribute to the Mg(2+) site.

Belongs to the dethiobiotin synthetase family. Homodimer. Mg(2+) is required as a cofactor.

The protein resides in the cytoplasm. It carries out the reaction (7R,8S)-7,8-diammoniononanoate + CO2 + ATP = (4R,5S)-dethiobiotin + ADP + phosphate + 3 H(+). The protein operates within cofactor biosynthesis; biotin biosynthesis; biotin from 7,8-diaminononanoate: step 1/2. Functionally, catalyzes a mechanistically unusual reaction, the ATP-dependent insertion of CO2 between the N7 and N8 nitrogen atoms of 7,8-diaminopelargonic acid (DAPA, also called 7,8-diammoniononanoate) to form a ureido ring. This chain is ATP-dependent dethiobiotin synthetase BioD, found in Chlorobaculum tepidum (strain ATCC 49652 / DSM 12025 / NBRC 103806 / TLS) (Chlorobium tepidum).